The chain runs to 252 residues: DNA-(apurinic or apyrimidinic site) lyase Nei2 (252 aa).

Pro2 functions as the Schiff-base intermediate with DNA in the catalytic mechanism. Glu3 acts as the Proton donor in catalysis. Lys51 acts as the Proton donor (in beta-elimination) in catalysis. Residues 216 to 250 (WVYGRAGEPCRRCGTLIQTDRGGERVTYWCPVCQT) form an FPG-type zinc finger. Zn(2+) contacts are provided by Cys225, Cys228, Cys245, and Cys248.

The protein belongs to the FPG family. As to quaternary structure, monomer. The cofactor is Zn(2+).

The enzyme catalyses 2'-deoxyribonucleotide-(2'-deoxyribose 5'-phosphate)-2'-deoxyribonucleotide-DNA = a 3'-end 2'-deoxyribonucleotide-(2,3-dehydro-2,3-deoxyribose 5'-phosphate)-DNA + a 5'-end 5'-phospho-2'-deoxyribonucleoside-DNA + H(+). Its function is as follows. Involved in base excision repair of DNA damaged by oxidation or by mutagenic agents. Acts as DNA glycosylase that recognizes and removes damaged bases. Functionally, involved in the repair of psoralen-UVA DNA cross-links. A lyase that cleaves single-stranded (ss)DNA but not double-stranded (ds)DNA with an abasic site. Has 5-hydroxyuracil (5-OH-U) glycosylase activity on ssDNA with 5-OH-U, with 10-fold less activity on dsDNA, but weak to no uracil glycosylase activity. Has weak glycosylase activity on thymine glycol and dihydrothymine residues in ssDNA. Cleaves the DNA backbone by beta-delta elimination to generate a single-strand break at the site of the removed base with both 3'- and 5'-phosphates. In Mycolicibacterium smegmatis (strain ATCC 700084 / mc(2)155) (Mycobacterium smegmatis), this protein is DNA-(apurinic or apyrimidinic site) lyase Nei2.